The chain runs to 502 residues: MTEKKYIVALDQGTTSSRAVVMDHDANIVSVSQREFEQIYPKPGWVEHDPMEIWASQSSTLVEVLAKADISSDQIAAIGITNQRETAIVWERETGKPIYNAIVWQCRRTADICEQLKRNGLEDYIRDNTGLVVDPYFSGTKVKWILDHVEGSRERAKRGELLFGTVDTWLIWKMTQGRVHVTDYTNASRTMLFNIHDLDWDEKMLDVLDIPRAMLPQVRKSSEVYGQTNIGGKGGTRIPIAGIAGDQQAALFGQLCVKEGMAKNTYGTGCFMLMNTGEKAVKSENGLLTTIACGPSGEVNYALEGAVFMAGASIQWLRDEMKLISDAFDSEYFATKVKDTNGVYVVPAFTGLGAPYWDPYARGAIFGLTRGVNSNHIIRATLESIAYQTRDVLEAMQADSGIRLHALRVDGGAVANNFLMQFQSDILGTRVERPEVREVTALGAAYLAGLAVGYWQNLDELQEKAVIEREFRPGIETTERNYRYSGWKKAVQRAMAWEEHDK.

T14 contributes to the ADP binding site. 3 residues coordinate ATP: T14, T15, and S16. T14 provides a ligand contact to sn-glycerol 3-phosphate. R18 contributes to the ADP binding site. Sn-glycerol 3-phosphate-binding residues include R84, E85, Y136, and D246. Glycerol is bound by residues R84, E85, Y136, D246, and Q247. T268 and G311 together coordinate ADP. ATP-binding residues include T268, G311, Q315, and G412. Residues G412 and N416 each contribute to the ADP site.

This sequence belongs to the FGGY kinase family. As to quaternary structure, homotetramer and homodimer (in equilibrium). Heterodimer with EIIA-Glc. Binds 1 zinc ion per glycerol kinase EIIA-Glc dimer. The zinc ion is important for dimerization.

The catalysed reaction is glycerol + ATP = sn-glycerol 3-phosphate + ADP + H(+). The protein operates within polyol metabolism; glycerol degradation via glycerol kinase pathway; sn-glycerol 3-phosphate from glycerol: step 1/1. With respect to regulation, activity of this regulatory enzyme is affected by several metabolites. Allosterically and non-competitively inhibited by fructose 1,6-bisphosphate (FBP) and unphosphorylated phosphocarrier protein EIIA-Glc (III-Glc), an integral component of the bacterial phosphotransferase (PTS) system. In terms of biological role, key enzyme in the regulation of glycerol uptake and metabolism. Catalyzes the phosphorylation of glycerol to yield sn-glycerol 3-phosphate. The sequence is that of Glycerol kinase from Salmonella arizonae (strain ATCC BAA-731 / CDC346-86 / RSK2980).